The sequence spans 151 residues: Regulatory protein RecX (151 aa).

It belongs to the RecX family.

Its subcellular location is the cytoplasm. Functionally, modulates RecA activity. The chain is Regulatory protein RecX from Chlorobium phaeobacteroides (strain BS1).